We begin with the raw amino-acid sequence, 422 residues long: GTPase Obg (422 aa).

The Obg domain maps to 1–156 (MKFIDEVNVL…FALRLVLKVL (156 aa)). Residues 157-324 (ADVGLVGKPS…LKAAIFKMLE (168 aa)) enclose the OBG-type G domain. GTP contacts are provided by residues 163–170 (GKPSAGKS), 188–192 (FTTLV), 209–212 (DLPG), 278–281 (NKSD), and 305–307 (SAL). Serine 170 and threonine 190 together coordinate Mg(2+). Residues 342 to 420 (NITLDRDALK…IGNFEFDWSD (79 aa)) form the OCT domain.

It belongs to the TRAFAC class OBG-HflX-like GTPase superfamily. OBG GTPase family. As to quaternary structure, monomer. Mg(2+) serves as cofactor.

It is found in the cytoplasm. An essential GTPase which binds GTP, GDP and possibly (p)ppGpp with moderate affinity, with high nucleotide exchange rates and a fairly low GTP hydrolysis rate. Plays a role in control of the cell cycle, stress response, ribosome biogenesis and in those bacteria that undergo differentiation, in morphogenesis control. In Metamycoplasma arthritidis (strain 158L3-1) (Mycoplasma arthritidis), this protein is GTPase Obg.